Consider the following 432-residue polypeptide: D-amino acid dehydrogenase (432 aa).

3–17 serves as a coordination point for FAD; sequence VVILGSGVVGVTSAW.

This sequence belongs to the DadA oxidoreductase family. FAD is required as a cofactor.

It catalyses the reaction a D-alpha-amino acid + A + H2O = a 2-oxocarboxylate + AH2 + NH4(+). It functions in the pathway amino-acid degradation; D-alanine degradation; NH(3) and pyruvate from D-alanine: step 1/1. In terms of biological role, oxidative deamination of D-amino acids. In Salmonella agona (strain SL483), this protein is D-amino acid dehydrogenase.